The primary structure comprises 625 residues: Chaperone protein HtpG (625 aa).

The a; substrate-binding stretch occupies residues 1–341 (MEKKQFQAES…SEDLSLNISR (341 aa)). Residues 342–551 (EMLQHDRQLK…DGEITLEMEK (210 aa)) form a b region. The tract at residues 552 to 625 (VLQAMPDNQN…FSQNMCKVMV (74 aa)) is c.

This sequence belongs to the heat shock protein 90 family. As to quaternary structure, homodimer.

The protein localises to the cytoplasm. Functionally, molecular chaperone. Has ATPase activity. This chain is Chaperone protein HtpG, found in Shouchella clausii (strain KSM-K16) (Alkalihalobacillus clausii).